The following is a 432-amino-acid chain: Alpha-ketoglutarate permease (432 aa).

Residues 1–32 (MAESTVTADSKLTSSDTRRRIWAIVGASSGNL) lie on the Cytoplasmic side of the membrane. A helical transmembrane segment spans residues 33–53 (VEWFDFYVYSFCSLYFAHIFF). Topologically, residues 54–62 (PSGNTTTQL) are periplasmic. Residues 63 to 83 (LQTAGVFAAGFLMRPIGGWLF) traverse the membrane as a helical segment. The Cytoplasmic segment spans residues 84–95 (GRIADKHGRKKS). Residues 96-116 (MLLSVCMMCFGSLVIACLPGY) form a helical membrane-spanning segment. At 117–118 (ET) the chain is on the periplasmic side. The helical transmembrane segment at 119 to 139 (IGTWAPALLLLARLFQGLSVG) threads the bilayer. Topologically, residues 140–162 (GEYGTSATYMSEVAVEGRKGFYA) are cytoplasmic. A helical membrane pass occupies residues 163–183 (SFQYVTLIGGQLLALLVVVVL). The Periplasmic segment spans residues 184-193 (QHTMEDAALR). Residues 194-214 (EWGWRIPFALGAVLAVVALWL) traverse the membrane as a helical segment. At 215 to 243 (RRQLDETSQQETRALKEAGSLKGLWRNRR) the chain is on the cytoplasmic side. Residues 244–264 (AFIMVLGFTAAGSLCFYTFTT) traverse the membrane as a helical segment. The Periplasmic portion of the chain corresponds to 265–279 (YMQKYLVNTAGMHAN). Residues 280–300 (VASGIMTAALFVFMLIQPLIG) traverse the membrane as a helical segment. Residues 301 to 309 (ALSDKIGRR) lie on the Cytoplasmic side of the membrane. The chain crosses the membrane as a helical span at residues 310–330 (TSMLCFGSLAAIFTVPILSAL). Residues 331-339 (QNVSSPYAA) are Periplasmic-facing. A helical membrane pass occupies residues 340 to 360 (FGLVMCALLIVSFYTSISGIL). Over 361–373 (KAEMFPAQVRALG) the chain is Cytoplasmic. Residues 374 to 394 (VGLSYAVANAIFGGSAEYVAL) form a helical membrane-spanning segment. The Periplasmic portion of the chain corresponds to 395 to 402 (SLKSIGME). Residues 403-423 (TAFFWYVTLMAVVAFLVSLML) form a helical membrane-spanning segment. Residues 424–432 (HRKGKGMRL) are Cytoplasmic-facing.

This sequence belongs to the major facilitator superfamily. Metabolite:H+ Symporter (MHS) family (TC 2.A.1.6) family.

It is found in the cell inner membrane. Its function is as follows. Uptake of alpha-ketoglutarate across the boundary membrane with the concomitant import of a cation (symport system). The polypeptide is Alpha-ketoglutarate permease (kgtP) (Escherichia coli (strain K12)).